Consider the following 118-residue polypeptide: Holo-[acyl-carrier-protein] synthase (118 aa).

Mg(2+) contacts are provided by D8 and E58.

It belongs to the P-Pant transferase superfamily. AcpS family. Mg(2+) is required as a cofactor.

It is found in the cytoplasm. It carries out the reaction apo-[ACP] + CoA = holo-[ACP] + adenosine 3',5'-bisphosphate + H(+). In terms of biological role, transfers the 4'-phosphopantetheine moiety from coenzyme A to a Ser of acyl-carrier-protein. The sequence is that of Holo-[acyl-carrier-protein] synthase from Lactobacillus helveticus (strain DPC 4571).